A 152-amino-acid chain; its full sequence is Putative pseudoazurin (152 aa).

The N-terminal stretch at 1 to 23 (MPLKFGLIVATAALIASAASLMA) is a signal peptide. Positions 28–116 (VQMLNKGTDG…MGMVALIQVG (89 aa)) constitute a Plastocyanin-like domain. The Cu cation site is built by H63, C101, H104, and M109.

Requires Cu cation as cofactor.

Its subcellular location is the periplasm. Its function is as follows. This soluble electron transfer copper protein is required for the inactivation of copper-containing nitrite reductase in the presence of oxygen. The protein is Putative pseudoazurin (azu) of Rhizobium leguminosarum bv. viciae.